A 180-amino-acid chain; its full sequence is UPF0227 protein ECA1814 (180 aa).

The protein belongs to the UPF0227 family.

This Pectobacterium atrosepticum (strain SCRI 1043 / ATCC BAA-672) (Erwinia carotovora subsp. atroseptica) protein is UPF0227 protein ECA1814.